Here is a 268-residue protein sequence, read N- to C-terminus: Undecaprenyl-diphosphatase (268 aa).

7 helical membrane-spanning segments follow: residues 43–63 (FWKT…LAIY), 85–105 (IGVL…GTFI), 108–128 (VLFN…VLLW), 141–161 (AMAF…AAMV), 184–204 (AAEF…VYDV), 217–237 (FIII…VKTF), and 246–266 (FTFF…ALAL).

Belongs to the UppP family.

The protein resides in the cell inner membrane. The enzyme catalyses di-trans,octa-cis-undecaprenyl diphosphate + H2O = di-trans,octa-cis-undecaprenyl phosphate + phosphate + H(+). Functionally, catalyzes the dephosphorylation of undecaprenyl diphosphate (UPP). Confers resistance to bacitracin. This chain is Undecaprenyl-diphosphatase, found in Afipia carboxidovorans (strain ATCC 49405 / DSM 1227 / KCTC 32145 / OM5) (Oligotropha carboxidovorans).